A 372-amino-acid chain; its full sequence is N-acetyllactosaminide beta-1,3-N-acetylglucosaminyltransferase 3 (372 aa).

At 1-10 the chain is on the cytoplasmic side; the sequence is MKYLRHRRPN. Residues 11–31 form a helical; Signal-anchor for type II membrane protein membrane-spanning segment; the sequence is ATLILAIGAFTLLLFSLLVSP. The Lumenal portion of the chain corresponds to 32–372; the sequence is PTCKVQEQPP…LTCGNQTQIY (341 aa). 5 N-linked (GlcNAc...) asparagine glycosylation sites follow: Asn64, Asn184, Asn202, Asn362, and Asn367.

Belongs to the glycosyltransferase 31 family. In terms of tissue distribution, expressed in colon, jejunum, stomach, esophagus, placenta and trachea.

It localises to the golgi apparatus membrane. The enzyme catalyses a 3-O-{beta-D-galactosyl-(1-&gt;3)-[N-acetyl-beta-D-glucosaminyl-(1-&gt;6)]-N-acetyl-alpha-D-galactosaminyl}-L-threonyl-[protein] + UDP-N-acetyl-alpha-D-glucosamine = 3-O-{beta-D-GlcNAc-(1-&gt;3)-beta-D-Gal-(1-&gt;3)-[beta-D-GlcNAc-(1-&gt;6)]-alpha-D-GalNAc}-L-threonyl-[protein] + UDP + H(+). The catalysed reaction is 3-O-{beta-D-galactosyl-(1-&gt;3)-[N-acetyl-beta-D-glucosaminyl-(1-&gt;6)]-N-acetyl-alpha-D-galactosaminyl}-L-seryl-[protein] + UDP-N-acetyl-alpha-D-glucosamine = 3-O-{beta-D-GlcNAc-(1-&gt;3)-beta-D-Gal-(1-&gt;3)-[beta-D-GlcNAc-(1-&gt;6)]-alpha-D-GalNAc}-L-seryl-[protein] + UDP + H(+). It catalyses the reaction a beta-D-galactosyl-(1-&gt;4)-N-acetyl-beta-D-glucosaminyl derivative + UDP-N-acetyl-alpha-D-glucosamine = an N-acetyl-beta-D-glucosaminyl-(1-&gt;3)-beta-D-galactosyl-(1-&gt;4)-N-acetyl-beta-D-glucosaminyl derivative + UDP + H(+). The protein operates within protein modification; protein glycosylation. Its function is as follows. Beta-1,3-N-acetylglucosaminyltransferase involved in the synthesis of poly-N-acetyllactosamine. Has activity for type 2 oligosaccharides. Also acts as a core1-1,3-N-acetylglucosaminyltransferase (Core1-beta3GlcNAcT) to form the 6-sulfo sialyl Lewis x on extended core1 O-glycans. The polypeptide is N-acetyllactosaminide beta-1,3-N-acetylglucosaminyltransferase 3 (B3GNT3) (Homo sapiens (Human)).